A 348-amino-acid chain; its full sequence is Cuticle collagen rol-6 (348 aa).

The tract at residues 76–348 (GYGATGVQPP…SARRHRKFQL (273 aa)) is disordered. Residues 120-137 (PGGGFPDGPFPNGGGPRG) are compositionally biased toward gly residues. 4 triple-helical region regions span residues 152-178 (GPAG…DGKD), 196-258 (GPLG…DGER), 261-284 (GRPG…TGRD), and 288-323 (GQSG…PGKD). Positions 194–231 (PQGPLGPQGPNGAPGLRGMRGARGQPGRPGRDGNPGMP) are enriched in low complexity. A compositionally biased stretch (gly residues) spans 297 to 306 (GLQGYGGAAG). The span at 322–338 (KDAEYCKCPGREGDAGR) shows a compositional bias: basic and acidic residues. Residues 339–348 (SARRHRKFQL) show a composition bias toward basic residues.

This sequence belongs to the cuticular collagen family. As to quaternary structure, collagen polypeptide chains are complexed within the cuticle by disulfide bonds and other types of covalent cross-links. As to expression, localizes in stripes along the alae.

Functionally, nematode cuticles are composed largely of collagen-like proteins. The cuticle functions both as an exoskeleton and as a barrier to protect the worm from its environment. May play a role in cuticle remodeling in response to the environment. Involved in body morphogenesis. In Caenorhabditis elegans, this protein is Cuticle collagen rol-6 (rol-6).